The sequence spans 432 residues: Homogentisate 1,2-dioxygenase (432 aa).

Residue His287 is the Proton acceptor of the active site. His330 and Glu336 together coordinate Fe cation. Positions 345 and 366 each coordinate homogentisate. Fe cation is bound at residue His366.

Belongs to the homogentisate dioxygenase family. As to quaternary structure, hexamer; dimer of trimers. Requires Fe cation as cofactor.

The catalysed reaction is homogentisate + O2 = 4-maleylacetoacetate + H(+). Its pathway is amino-acid degradation; L-phenylalanine degradation; acetoacetate and fumarate from L-phenylalanine: step 4/6. Its function is as follows. Involved in the catabolism of homogentisate (2,5-dihydroxyphenylacetate or 2,5-OH-PhAc), a central intermediate in the degradation of phenylalanine and tyrosine. Catalyzes the oxidative ring cleavage of the aromatic ring of homogentisate to yield maleylacetoacetate. The protein is Homogentisate 1,2-dioxygenase of Pseudomonas aeruginosa (strain ATCC 15692 / DSM 22644 / CIP 104116 / JCM 14847 / LMG 12228 / 1C / PRS 101 / PAO1).